The sequence spans 99 residues: RNA-binding protein Hfq (99 aa).

Residues 9 to 68 (DPFLNALRRERVPVSIYLVNGIKLQGQIESFDQFVILLKNTVSQMVYKHAISTVVPSRPV) enclose the Sm domain. The interval 64–99 (PSRPVSHHSNNPGGGSNYHGNNTAASQQSQEADDAE) is disordered.

It belongs to the Hfq family. As to quaternary structure, homohexamer.

Its function is as follows. RNA chaperone that binds small regulatory RNA (sRNAs) and mRNAs to facilitate mRNA translational regulation in response to envelope stress, environmental stress and changes in metabolite concentrations. Also binds with high specificity to tRNAs. The chain is RNA-binding protein Hfq from Pectobacterium carotovorum subsp. carotovorum (strain PC1).